Consider the following 233-residue polypeptide: Large ribosomal subunit protein uL1 (233 aa).

It belongs to the universal ribosomal protein uL1 family. In terms of assembly, part of the 50S ribosomal subunit.

Functionally, binds directly to 23S rRNA. The L1 stalk is quite mobile in the ribosome, and is involved in E site tRNA release. Protein L1 is also a translational repressor protein, it controls the translation of the L11 operon by binding to its mRNA. In Brucella suis (strain ATCC 23445 / NCTC 10510), this protein is Large ribosomal subunit protein uL1.